A 393-amino-acid chain; its full sequence is Protein TsgA (393 aa).

12 helical membrane passes run 11–31, 51–71, 78–98, 101–121, 134–154, 162–182, 206–226, 245–265, 273–293, 297–317, 332–352, and 361–381; these read WISF…GMVM, FLNA…EIVP, FGFL…SLAL, AAMF…TFLI, LLFT…IAAF, WYWV…LTFG, IGVL…LGFI, TLVS…SFIL, ILTV…TGTP, AWSI…IITL, FVLT…GPIV, and LLTA…LGFV.

It belongs to the major facilitator superfamily. TsgA family.

The protein localises to the cell inner membrane. In Shigella dysenteriae serotype 1 (strain Sd197), this protein is Protein TsgA.